A 409-amino-acid polypeptide reads, in one-letter code: Na(+)/H(+) antiporter NhaA 2 (409 aa).

12 helical membrane passes run 10–30 (VAAG…NTPA), 60–80 (GLLV…FLAG), 89–109 (LVPA…YLAI), 118–138 (GWPV…AVFG), 148–168 (FLLA…AVFF), 171–191 (GLDL…AVVG), 203–223 (IAVV…TLSS), 224–244 (GIHA…LSGL), 257–277 (IVLP…IGLA), 283–303 (FWGI…AGGL), 328–348 (LLGG…FAGL), and 356–376 (TLAV…TLSI). The disordered stretch occupies residues 384-409 (AGAAADDDDATRDDFPAHADGGPARA).

The protein belongs to the NhaA Na(+)/H(+) (TC 2.A.33) antiporter family.

The protein localises to the cell membrane. It catalyses the reaction Na(+)(in) + 2 H(+)(out) = Na(+)(out) + 2 H(+)(in). Functionally, na(+)/H(+) antiporter that extrudes sodium in exchange for external protons. The polypeptide is Na(+)/H(+) antiporter NhaA 2 (Clavibacter michiganensis subsp. michiganensis (strain NCPPB 382)).